A 575-amino-acid polypeptide reads, in one-letter code: Transcription factor COE2 (575 aa).

The tract at residues 62-65 (RKSN) is interaction with DNA. The C5-type zinc-finger motif lies at 150–169 (CRVLLTHEVMCSRCCEKKSC). Interaction with DNA stretches follow at residues 196–203 (NCLKTAGN) and 235–238 (NNSK). Positions 253-336 (PCIKAISPSE…KGAPGRFIYT (84 aa)) constitute an IPT/TIG domain. Residues 441–453 (STQGNNQGYIRNT) are compositionally biased toward polar residues. The segment at 441 to 479 (STQGNNQGYIRNTSSISPRGYSSSSTPQQSNYSTSSNSM) is disordered. The span at 454-479 (SSISPRGYSSSSTPQQSNYSTSSNSM) shows a compositional bias: low complexity.

It belongs to the COE family. As to quaternary structure, forms either a homodimer or a heterodimer with a related family member. Interacts with SIX1.

It localises to the nucleus. Its function is as follows. Transcription factor that, in osteoblasts, activates the decoy receptor for RANKL, TNFRSF11B, which in turn regulates osteoclast differentiation. Acts in synergy with the Wnt-responsive LEF1/CTNNB1 pathway. Recognizes variations of the palindromic sequence 5'-ATTCCCNNGGGAATT-3'. The protein is Transcription factor COE2 (EBF2) of Bos taurus (Bovine).